The primary structure comprises 333 residues: HTH-type transcriptional repressor PurR (333 aa).

The 55-residue stretch at 2–56 (ATIKDVAKMAGVSTTTVSHVINKTRFVAKETEQQVLQAIKNLNYSPSAVARSLKV) folds into the HTH lacI-type domain. Positions 4-23 (IKDVAKMAGVSTTTVSHVIN) form a DNA-binding region, H-T-H motif. Residues 48 to 56 (SAVARSLKV) mediate DNA binding. Residues Tyr-73, Lys-189, Thr-191, Phe-220, and Asp-274 each contribute to the hypoxanthine site.

As to quaternary structure, homodimer.

It functions in the pathway purine metabolism; purine nucleotide biosynthesis [regulation]. Is the main repressor of the genes involved in the de novo synthesis of purine nucleotides, regulating purB, purC, purEK, purF, purHD, purL, purMN and guaBA expression. PurR is allosterically activated to bind its cognate DNA by binding the purine corepressors, hypoxanthine or guanine, thereby effecting transcription repression. This Histophilus somni (strain 129Pt) (Haemophilus somnus) protein is HTH-type transcriptional repressor PurR.